A 132-amino-acid polypeptide reads, in one-letter code: C-glycoside deglycosidase beta subunit (132 aa).

The protein belongs to the C-glycoside deglycosidase beta subunit family. In terms of assembly, heterodimer composed of an alpha subunit (CarB2) and a beta subunit (CarC2). The cofactor is a divalent metal cation.

It carries out the reaction 3''-dehydroorientin = 1,5-anhydro-D-erythro-hex-1-en-3-ulose + luteolin. Activity is strongly reduced in the presence of chelating agents. In terms of biological role, carbon-carbon bond-cleaving enzyme which participates in the metabolism of C-glycosides. Acts on the C8-glycosylated compound 3''-dehydroorientin (3''-oxo-orientin). The polypeptide is C-glycoside deglycosidase beta subunit (Arthrobacter globiformis (strain ATCC 8010 / DSM 20124 / JCM 1332 / NBRC 12137 / NCIMB 8907 / NRRL B-2979 / 168)).